We begin with the raw amino-acid sequence, 1449 residues long: ABC transporter G family member 21 (1449 aa).

Residues 1 to 10 are compositionally biased toward basic and acidic residues; it reads MEEYELREIA. The segment at 1–49 is disordered; that stretch reads MEEYELREIALQEGGSNLDINTPPNYDNPVGDGSSPPDSPDIQKSENQF. Residues 14–25 show a composition bias toward polar residues; that stretch reads GGSNLDINTPPN. One can recognise an ABC transporter 1 domain in the interval 130 to 383; it reads ISFFNLFKPS…FIDLGFDCEP (254 aa). The region spanning 488-731 is the ABC transmembrane type-2 1 domain; sequence WGDKFSLISR…ILSVEGKDYL (244 aa). The next 5 membrane-spanning stretches (helical) occupy residues 519-539, 577-597, 602-622, 634-654, and 747-767; these read IPGL…NAFL, IPLT…MFGL, GKFF…TNLF, ISQN…GYTI, and FITY…MEYF. Positions 818 to 1062 constitute an ABC transporter 2 domain; that stretch reads FTWQNINYTV…LTSYFERYGV (245 aa). Residue 854–861 participates in ATP binding; the sequence is GSSGAGKT. In terms of domain architecture, ABC transmembrane type-2 2 spans 1152-1386; that stretch reads FYTYGSFIQS…PISEPLTGYV (235 aa). Transmembrane regions (helical) follow at residues 1155–1175, 1188–1208, 1228–1248, 1266–1286, 1296–1316, and 1423–1443; these read YGSF…FWSL, FIFE…PQFI, FAIS…TIFF, FYFW…GQAV, AHTL…VMVI, and LALI…FVYI.

Belongs to the ABC transporter superfamily. ABCG family. PDR (TC 3.A.1.205) subfamily.

It is found in the membrane. The chain is ABC transporter G family member 21 (abcG21) from Dictyostelium discoideum (Social amoeba).